The following is a 185-amino-acid chain: Photosystem I assembly protein Ycf4 (185 aa).

Transmembrane regions (helical) follow at residues 21 to 43 (NFFWACILFLGSLGFLSVGISSY) and 63 to 85 (GVVMSFYGIAGLFISSYLWCTIL).

It belongs to the Ycf4 family.

The protein resides in the plastid. It is found in the chloroplast thylakoid membrane. In terms of biological role, seems to be required for the assembly of the photosystem I complex. This Aegilops crassa (Persian goatgrass) protein is Photosystem I assembly protein Ycf4.